A 537-amino-acid chain; its full sequence is Endoprotease aex-5 (537 aa).

An N-terminal signal peptide occupies residues 1 to 17 (MKLIFLLLLFGVSPIVC). The propeptide occupies 18 to 99 (QDFEDGVFLA…KLQGFRRYKR (82 aa)). Residues 111-413 (VWNLTPSLYI…FGLLNAQKLV (303 aa)) form the Peptidase S8 domain. Residue asparagine 129 is glycosylated (N-linked (GlcNAc...) asparagine). Residues aspartate 139 and histidine 178 each act as charge relay system in the active site. An intrachain disulfide couples cysteine 286 to cysteine 316. The Charge relay system role is filled by serine 346. Asparagine 380 carries an N-linked (GlcNAc...) asparagine glycan. The P/Homo B domain maps to 407 to 537 (LNAQKLVVMA…KMFKVVGTMS (131 aa)).

Belongs to the peptidase S8 family. Furin subfamily.

The protein localises to the secreted. Its function is as follows. Probable serine endoprotease which cleaves preproteins at paired basic amino acids. May process FMRFamide-like (flp) and neuropeptide-like protein (nlp) neuropeptides. In muscles, involved in neuronal retrograde signaling by regulating presynaptic activity and localization of synaptic vesicle fusion protein unc-13 at the neuromuscular junction (NMJ). Acts in the intestine to regulate anterior body muscle contractions (aBOC) and the expulsion steps during the defecation motor program (DMP). Probably by regulating DMP, required for fatty acid uptake by intestinal cells and therefore regulates the levels of triglycerides in the intestine. Plays a role in locomotion. The chain is Endoprotease aex-5 from Caenorhabditis elegans.